The following is a 79-amino-acid chain: Protein S100-G (79 aa).

S2 bears the N-acetylserine mark. EF-hand domains are found at residues 13-48 and 45-79; these read IFEK…KGPN and KGPN…KISQ. Positions 26 and 31 each coordinate Ca(2+). Phosphoserine is present on S42. Ca(2+) is bound by residues D58, N60, D62, E64, and E69.

This sequence belongs to the S-100 family.

In Homo sapiens (Human), this protein is Protein S100-G (S100G).